A 508-amino-acid polypeptide reads, in one-letter code: UTP--glucose-1-phosphate uridylyltransferase (508 aa).

Blocked amino end (Ser) is present on serine 2. Serine 13 is modified (phosphoserine). UTP contacts are provided by residues 113–116, lysine 127, glutamine 190, and glycine 222; that span reads LNGG. 115–116 contacts substrate; sequence GG. Residue lysine 127 participates in Mg(2+) binding. Substrate-binding positions include histidine 223 and 251–253; that span reads NID. The UTP site is built by aspartate 253 and lysine 396. Aspartate 253 is a binding site for Mg(2+). The active site involves lysine 396. Threonine 426 bears the Phosphothreonine mark. The residue at position 434 (serine 434) is a Phosphoserine. Lysine 438 is subject to N6-acetyllysine. 2 positions are modified to phosphoserine: serine 448 and serine 461. The tract at residues 457–508 is oligomerization; sequence HLTVSGDVTFGKNVSLKGTVIIIANHGDRIDIPPGAVLENKIVSGNLRILDH. Residues 502-503 form a critical for end-to-end subunit interaction region; it reads NL.

It belongs to the UDPGP type 1 family. In terms of assembly, homooctamer.

The protein localises to the cytoplasm. The enzyme catalyses alpha-D-glucose 1-phosphate + UTP + H(+) = UDP-alpha-D-glucose + diphosphate. It functions in the pathway glycan biosynthesis; glycogen biosynthesis. Its function is as follows. UTP--glucose-1-phosphate uridylyltransferase catalyzing the conversion of glucose-1-phosphate into UDP-glucose, a crucial precursor for the production of glycogen. This chain is UTP--glucose-1-phosphate uridylyltransferase (UGP2), found in Bos taurus (Bovine).